Consider the following 230-residue polypeptide: Thymidylate kinase (230 aa).

20–27 (GGEGAGKS) is an ATP binding site.

This sequence belongs to the thymidylate kinase family.

It carries out the reaction dTMP + ATP = dTDP + ADP. Phosphorylation of dTMP to form dTDP in both de novo and salvage pathways of dTTP synthesis. The polypeptide is Thymidylate kinase (Rhodopseudomonas palustris (strain TIE-1)).